Here is a 374-residue protein sequence, read N- to C-terminus: Tomoregulin-2 (374 aa).

Residues 1-40 form the signal peptide; sequence MVLWESPRQCSSWTLCEGFCWLLLLPVMLLIVARPVKLAA. Topologically, residues 41–320 are extracellular; sequence FPTSLSDCQT…VPGPVRFQYV (280 aa). Kazal-like domains follow at residues 90 to 137 and 181 to 229; these read VCQF…SCAT and VCNI…RCQD. Intrachain disulfides connect C91–C121, C95–C114, C103–C135, C182–C213, C186–C206, and C195–C227. A glycan (N-linked (GlcNAc...) (complex) asparagine; atypical) is linked at N204. N230 carries N-linked (GlcNAc...) asparagine glycosylation. Residues 261–301 enclose the EGF-like domain; the sequence is HHIPCPEHYNGFCMHGKCEHSINMQEPSCRCDAGYTGQHCE. Cystine bridges form between C265/C278, C273/C289, and C291/C300. The segment at 303 to 320 is required for shedding; sequence KDYSVLYVVPGPVRFQYV. Residues 321–341 traverse the membrane as a helical segment; sequence LIAAVIGTIQIAVICVVVLCI. Residues 342 to 374 lie on the Cytoplasmic side of the membrane; that stretch reads TRKCPRSNRIHRQKQNTGHYSSDNTTRASTRLI. The disordered stretch occupies residues 353 to 374; it reads RQKQNTGHYSSDNTTRASTRLI. Polar residues predominate over residues 356–374; that stretch reads QNTGHYSSDNTTRASTRLI.

It belongs to the tomoregulin family. In terms of processing, O-glycosylated; contains chondroitin sulfate glycosaminoglycans. A soluble form (TMEFF2-ECD) is produced by proteolytic shedding. This shedding can be induced by phorbol ester or pro-inflammatory cytokines such as TNFalpha, and is mediated by ADAM17. As to expression, highly expressed in adult and fetal brain, spinal cord and prostate. Expressed in all brain regions except the pituitary gland, with highest levels in amygdala and corpus callosum. Expressed in the pericryptal myofibroblasts and other stromal cells of normal colonic mucosa. Expressed in prostate carcinoma. Down-regulated in colorectal cancer. Present in Alzheimer disease plaques (at protein level). Isoform 3 is expressed weakly in testis and at high levels in normal and cancerous prostate.

The protein resides in the membrane. It localises to the secreted. Its function is as follows. May be a survival factor for hippocampal and mesencephalic neurons. The shedded form up-regulates cancer cell proliferation, probably by promoting ERK1/2 phosphorylation. This is Tomoregulin-2 (TMEFF2) from Homo sapiens (Human).